The primary structure comprises 378 residues: Transmembrane protein adipocyte-associated 1 homolog (378 aa).

3 N-linked (GlcNAc...) asparagine glycosylation sites follow: asparagine 16, asparagine 25, and asparagine 36. The next 7 helical transmembrane spans lie at 61–81 (VMLLIPNVAFLVFLMWKLPSA), 88–108 (TSSPIFVAFYILVFVVAAVGI), 136–156 (FFLLAIELSVIILGLAFGHLE), 164–184 (VLAITAVLSLAYSITQGTLEI), 205–225 (HFWLASSCFFFLVYSLIVILP), 247–267 (ILALLNLVQGLGSALLCADII), and 278–298 (FLYFSVFAPLIYVTFLKGFFG). The tract at residues 316-335 (DSDVHLPHTSSSGLGRKDLD) is disordered.

Belongs to the UPF0359 family.

Its subcellular location is the membrane. The protein is Transmembrane protein adipocyte-associated 1 homolog (tpra1) of Danio rerio (Zebrafish).